The sequence spans 612 residues: Alpha-glycerophosphate oxidase (612 aa).

21 to 49 (DLLIIGGGITGAGVALQAAASGLDTGLIE) is a binding site for FAD. Positions 399 to 408 (ETSTSEKELD) are enriched in basic and acidic residues. Positions 399–418 (ETSTSEKELDPSAVSRGSSF) are disordered.

The protein belongs to the FAD-dependent glycerol-3-phosphate dehydrogenase family. It depends on FAD as a cofactor.

It is found in the cytoplasm. The enzyme catalyses sn-glycerol 3-phosphate + O2 = dihydroxyacetone phosphate + H2O2. The protein is Alpha-glycerophosphate oxidase (glpO) of Streptococcus pyogenes serotype M1.